Here is an 86-residue protein sequence, read N- to C-terminus: Large ribosomal subunit protein bL27 (86 aa).

A disordered region spans residues M1–K24. The segment covering S9–S19 has biased composition (polar residues).

The protein belongs to the bacterial ribosomal protein bL27 family.

The protein is Large ribosomal subunit protein bL27 of Salinibacter ruber (strain DSM 13855 / M31).